A 170-amino-acid polypeptide reads, in one-letter code: Acetyl-CoA decarbonylase/synthase complex subunit epsilon 1 (170 aa).

It belongs to the CdhB family. Heterotetramer of two alpha and two epsilon subunits. The ACDS complex is made up of alpha, epsilon, beta, gamma and delta subunits with a probable stoichiometry of (alpha(2)epsilon(2))(4)-beta(8)-(gamma(1)delta(1))(8).

Its pathway is one-carbon metabolism; methanogenesis from acetate. Part of a complex that catalyzes the reversible cleavage of acetyl-CoA, allowing growth on acetate as sole source of carbon and energy. The alpha-epsilon subcomponent functions as a carbon monoxide dehydrogenase. The precise role of the epsilon subunit is unclear; it may have a stabilizing role within the alpha(2)epsilon(2) component and/or be involved in electron transfer to FAD during a potential FAD-mediated CO oxidation. This is Acetyl-CoA decarbonylase/synthase complex subunit epsilon 1 (cdhB1) from Methanosarcina mazei (strain ATCC BAA-159 / DSM 3647 / Goe1 / Go1 / JCM 11833 / OCM 88) (Methanosarcina frisia).